Here is a 322-residue protein sequence, read N- to C-terminus: Cytochrome c biogenesis protein CcsA (322 aa).

8 consecutive transmembrane segments (helical) span residues 9–29, 44–64, 71–91, 98–118, 143–163, 226–246, 253–273, and 287–307; these read ILTH…LITL, GMIA…IYSG, LYES…VPYF, LTTI…SGLL, MILS…LLVI, VISL…VWAN, WSWD…AIYL, and AIVA…VNLL.

It belongs to the CcmF/CycK/Ccl1/NrfE/CcsA family. May interact with Ccs1.

Its subcellular location is the plastid. It is found in the chloroplast thylakoid membrane. Required during biogenesis of c-type cytochromes (cytochrome c6 and cytochrome f) at the step of heme attachment. The sequence is that of Cytochrome c biogenesis protein CcsA from Guizotia abyssinica (Niger).